We begin with the raw amino-acid sequence, 352 residues long: Small ribosomal subunit biogenesis GTPase RsgA 2 (352 aa).

Positions Arg100–Leu257 constitute a CP-type G domain. Residues Thr147–Asp150 and Gly199–Thr207 each bind GTP. 4 residues coordinate Zn(2+): Cys278, Cys283, His285, and Cys291.

Belongs to the TRAFAC class YlqF/YawG GTPase family. RsgA subfamily. Monomer. Associates with 30S ribosomal subunit, binds 16S rRNA. Zn(2+) serves as cofactor.

The protein localises to the cytoplasm. One of several proteins that assist in the late maturation steps of the functional core of the 30S ribosomal subunit. Helps release RbfA from mature subunits. May play a role in the assembly of ribosomal proteins into the subunit. Circularly permuted GTPase that catalyzes slow GTP hydrolysis, GTPase activity is stimulated by the 30S ribosomal subunit. This is Small ribosomal subunit biogenesis GTPase RsgA 2 from Lactiplantibacillus plantarum (strain ATCC BAA-793 / NCIMB 8826 / WCFS1) (Lactobacillus plantarum).